The primary structure comprises 197 residues: Peptide deformylase (197 aa).

Fe cation is bound by residues Cys-106 and His-148. Glu-149 is a catalytic residue. His-152 serves as a coordination point for Fe cation.

The protein belongs to the polypeptide deformylase family. The cofactor is Fe(2+).

It catalyses the reaction N-terminal N-formyl-L-methionyl-[peptide] + H2O = N-terminal L-methionyl-[peptide] + formate. Its function is as follows. Removes the formyl group from the N-terminal Met of newly synthesized proteins. Requires at least a dipeptide for an efficient rate of reaction. N-terminal L-methionine is a prerequisite for activity but the enzyme has broad specificity at other positions. The chain is Peptide deformylase from Mycolicibacterium smegmatis (strain ATCC 700084 / mc(2)155) (Mycobacterium smegmatis).